Here is a 341-residue protein sequence, read N- to C-terminus: Cytochrome c biogenesis protein CcsA (341 aa).

Transmembrane regions (helical) follow at residues 16–36 (LILL…GMSI), 37–57 (LPTL…TLLG), 68–88 (LSNL…VHLI), 97–117 (LVGV…ALSL), 142–162 (VMML…AFLI), 249–269 (IIGL…VWAN), 276–296 (WSWD…AAYL), and 310–330 (AILA…VNLL).

The protein belongs to the CcmF/CycK/Ccl1/NrfE/CcsA family. May interact with ccs1.

The protein resides in the cellular thylakoid membrane. Its function is as follows. Required during biogenesis of c-type cytochromes (cytochrome c6 and cytochrome f) at the step of heme attachment. The polypeptide is Cytochrome c biogenesis protein CcsA (Rippkaea orientalis (strain PCC 8801 / RF-1) (Cyanothece sp. (strain PCC 8801))).